A 145-amino-acid polypeptide reads, in one-letter code: UPF0102 protein BAV3162 (145 aa).

Belongs to the UPF0102 family.

This chain is UPF0102 protein BAV3162, found in Bordetella avium (strain 197N).